Reading from the N-terminus, the 375-residue chain is Acetylornithine aminotransferase (375 aa).

Pyridoxal 5'-phosphate contacts are provided by residues 102 to 103 (GA) and F129. R132 lines the N(2)-acetyl-L-ornithine pocket. Position 214 to 217 (214 to 217 (DEVQ)) interacts with pyridoxal 5'-phosphate. K243 is subject to N6-(pyridoxal phosphate)lysine. S271 contributes to the N(2)-acetyl-L-ornithine binding site. T272 is a binding site for pyridoxal 5'-phosphate.

It belongs to the class-III pyridoxal-phosphate-dependent aminotransferase family. ArgD subfamily. Homodimer. Requires pyridoxal 5'-phosphate as cofactor.

Its subcellular location is the cytoplasm. It carries out the reaction N(2)-acetyl-L-ornithine + 2-oxoglutarate = N-acetyl-L-glutamate 5-semialdehyde + L-glutamate. It participates in amino-acid biosynthesis; L-arginine biosynthesis; N(2)-acetyl-L-ornithine from L-glutamate: step 4/4. The protein is Acetylornithine aminotransferase of Archaeoglobus fulgidus (strain ATCC 49558 / DSM 4304 / JCM 9628 / NBRC 100126 / VC-16).